The following is a 388-amino-acid chain: MSTLQAVKYSRGNLEVLDQLRLPHEFHYDNVSTSEEAFDCIRSMRVRGAPAIAIVASLAHAVELHNGSCRATSSEEVISYIHGRLDYLKESRPTAVDLTNAINQLKARTQELAGQDRDAIIKAYIEEAENILEKDLKTNLSIGDHGADWLKDVAQAGPDGKISVLTHCNTGSLATSGHGTALGIIRTLQSRGWLNHAYCTETRPYNQGSRLTAFELVFEKIPSTLITDSMAAALFALQKETMNISAVIVGADRVVRNGDTANKIGTYQLAVLAKHHGIKFIVAAPTTSIDLETMTGEGIHIEERKREELTQISGATVGSDGSVDVAKTVRVATADQRIDVWNPAFDVTPHDLIDAVVTEKGAVVKGTNGEFDFSHVMPERWARLVGQQ.

Asp252 (proton donor) is an active-site residue.

It belongs to the eIF-2B alpha/beta/delta subunits family. MtnA subfamily.

The protein resides in the cytoplasm. Its subcellular location is the nucleus. The catalysed reaction is 5-(methylsulfanyl)-alpha-D-ribose 1-phosphate = 5-(methylsulfanyl)-D-ribulose 1-phosphate. The protein operates within amino-acid biosynthesis; L-methionine biosynthesis via salvage pathway; L-methionine from S-methyl-5-thio-alpha-D-ribose 1-phosphate: step 1/6. In terms of biological role, catalyzes the interconversion of methylthioribose-1-phosphate (MTR-1-P) into methylthioribulose-1-phosphate (MTRu-1-P). The chain is Methylthioribose-1-phosphate isomerase from Verticillium alfalfae (strain VaMs.102 / ATCC MYA-4576 / FGSC 10136) (Verticillium wilt of alfalfa).